The sequence spans 1531 residues: Nuclear factor of activated T-cells 5 (1531 aa).

2 disordered regions span residues 34–89 (ELQL…TSSS) and 114–141 (VSNR…RHTV). Residues 41-51 (RETSVASMSQT) are compositionally biased toward polar residues. Positions 63-89 (VVAADASSAPSSSSMGGACSSFTTSSS) are enriched in low complexity. Position 120 is a phosphoserine (serine 120). Position 122 is an N6-acetyllysine (lysine 122). The span at 122 to 134 (KQLTSNTVQQHPS) shows a compositional bias: polar residues. Serine 134 bears the Phosphoserine mark. A Phosphothreonine; by CDK5 modification is found at threonine 135. Position 155 is a phosphoserine (serine 155). 2 disordered regions span residues 175–220 (WMED…CEES) and 241–265 (TTDN…GVKK). Positions 179 to 192 (SPSNFSNMSTSSYN) are enriched in low complexity. The span at 200–212 (KSRKRNPKQRPGV) shows a compositional bias: basic residues. The span at 241–260 (TTDNKGNSKAGNGTLENQKG) shows a compositional bias: polar residues. Residues 264–443 (KKSPMLCGQY…SPILCTQPAG (180 aa)) enclose the RHD domain. Residues 293–300 (RARYLTEG) mediate DNA binding. Lysine 556 participates in a covalent cross-link: Glycyl lysine isopeptide (Lys-Gly) (interchain with G-Cter in SUMO1); alternate. Lysine 556 is covalently cross-linked (Glycyl lysine isopeptide (Lys-Gly) (interchain with G-Cter in SUMO2); alternate). Residue serine 561 is modified to Phosphoserine. Glycyl lysine isopeptide (Lys-Gly) (interchain with G-Cter in SUMO2) cross-links involve residues lysine 573 and lysine 603. Disordered regions lie at residues 640-666 (NIAG…QQIQ), 841-891 (VSPG…QVME), 958-996 (PPAV…TGTQ), 1211-1304 (PQVA…QEQQ), 1316-1371 (APMN…QEQQ), and 1473-1502 (ISQP…SPLA). Over residues 646-656 (SFSSPSSSHLP) the composition is skewed to low complexity. 2 stretches are compositionally biased toward polar residues: residues 841–852 (VSPGMFSSTEPT) and 869–878 (HPQSENTLSN). Composition is skewed to low complexity over residues 879–888 (QQQQQQQQQQ) and 960–980 (AVSG…PGTT). Composition is skewed to polar residues over residues 981–996 (MFQT…TGTQ) and 1224–1247 (PQSQ…NSPS). The segment covering 1248 to 1266 (QEQQQQQQQQQQQQQQQQQ) has biased composition (low complexity). Composition is skewed to polar residues over residues 1267–1278 (SILFSNQNTMAT) and 1291–1304 (FNPN…QEQQ). Low complexity predominate over residues 1320–1330 (QEQQPMQFQSQ). Residues 1331-1371 (STVSSLQNPGPTQSESSQTPLFHSSPQIQLVQGSPSSQEQQ) show a composition bias toward polar residues. The span at 1475–1486 (QPGQPQNEGQPP) shows a compositional bias: low complexity. Residues 1487–1502 (VTTLLSQQMPENSPLA) are compositionally biased toward polar residues.

Homodimer when bound to DNA, completely encircles its DNA target. Interacts with CIDEC; this interaction is direct and retains NFAT5 in the cytoplasm. Does not bind with Fos and Jun transcription factors. Interacts with DDX5 and DDX17; this interaction leads to DDX5/DDX17 recruitment to LNC2 and S100A4 promoters and NFAT5-mediated DDX5/DDX17-enhanced transactivation. Phosphorylated. Phosphorylated at Thr-135 by CDK5 in response to osmotic stress; this phosphorylation mediates its rapid nuclear localization. Post-translationally, poly-ADP-ribosylated by PARP1 in response to DNA damage, promoting recruitment to sites of R-loop-associated DNA damage. In terms of tissue distribution, widely expressed, with highest levels in skeletal muscle, brain, heart and peripheral blood leukocytes.

The protein localises to the nucleus. It is found in the cytoplasm. The protein resides in the chromosome. Its function is as follows. Transcription factor involved, among others, in the transcriptional regulation of osmoprotective and inflammatory genes. Binds the DNA consensus sequence 5'-[ACT][AG]TGGAAA[CAT]A[TA][ATC][CA][ATG][GT][GAC][CG][CT]-3'. Mediates the transcriptional response to hypertonicity. Positively regulates the transcription of LCN2 and S100A4 genes; optimal transactivation of these genes requires the presence of DDX5/DDX17. Also involved in the DNA damage response by preventing formation of R-loops; R-loops are composed of a DNA:RNA hybrid and the associated non-template single-stranded DNA. The polypeptide is Nuclear factor of activated T-cells 5 (Homo sapiens (Human)).